A 589-amino-acid chain; its full sequence is Actin-histidine N-methyltransferase (589 aa).

Residues Met-1–Pro-22 form a disordered region. Over residues Gln-10–Val-20 the composition is skewed to polar residues. S-adenosyl-L-methionine-binding positions include Arg-75, Glu-104–Phe-106, Arg-254, Asp-275–His-279, and Ser-325–Phe-327. The 221-residue stretch at Glu-94–Gly-314 folds into the SET domain. Residue Ser-513 is modified to Phosphoserine. The disordered stretch occupies residues Leu-547–Glu-589. Residues Arg-559–Glu-589 are compositionally biased toward basic and acidic residues.

It belongs to the class V-like SAM-binding methyltransferase superfamily. SETD3 actin-histidine methyltransferase family. In terms of assembly, interacts with MYOD1. In terms of processing, phosphorylated by GSK3B, which is required for recognition by the SCF(FBXW7) complex and subsequent degradation. Ubiquitinated by the SCF(FBXW7) complex following phosphorylation by GSK3B, leading to its degradation by the proteasome.

Its subcellular location is the cytoplasm. The protein localises to the nucleus. The enzyme catalyses L-histidyl-[protein] + S-adenosyl-L-methionine = N(tele)-methyl-L-histidyl-[protein] + S-adenosyl-L-homocysteine + H(+). Protein-histidine N-methyltransferase that specifically mediates 3-methylhistidine (tele-methylhistidine) methylation of actin at 'His-73'. Histidine methylation of actin is required for smooth muscle contraction of the laboring uterus during delivery. Does not have protein-lysine N-methyltransferase activity and probably only catalyzes histidine methylation of actin. This Dasypus novemcinctus (Nine-banded armadillo) protein is Actin-histidine N-methyltransferase.